Here is a 196-residue protein sequence, read N- to C-terminus: MIVPPNSAAPSSSLVPAGSAARSTVQGYDPKLHDPYFDGLSGQLADKGFVTAAADDLITWARTGSLMWMTFGLACCAVEMMHSAMPRYDLERYGFAPRASPRQSDVMIVAGTLTNKMAPALRKVYDQMPEPRYVISMGSCANGGGYYYYSYSVVRGCDRIVPIDIYVPGCPPTAEALVYGVLQLQKKIRRTGTIER.

Residues Cys75, Cys76, Cys140, and Cys170 each coordinate [4Fe-4S] cluster.

Belongs to the complex I 20 kDa subunit family. In terms of assembly, NDH-1 is composed of 14 different subunits. Subunits NuoB, C, D, E, F, and G constitute the peripheral sector of the complex. [4Fe-4S] cluster is required as a cofactor.

The protein resides in the cell inner membrane. It catalyses the reaction a quinone + NADH + 5 H(+)(in) = a quinol + NAD(+) + 4 H(+)(out). Functionally, NDH-1 shuttles electrons from NADH, via FMN and iron-sulfur (Fe-S) centers, to quinones in the respiratory chain. Couples the redox reaction to proton translocation (for every two electrons transferred, four hydrogen ions are translocated across the cytoplasmic membrane), and thus conserves the redox energy in a proton gradient. This chain is NADH-quinone oxidoreductase subunit B, found in Caulobacter sp. (strain K31).